The chain runs to 255 residues: Imidazole glycerol phosphate synthase subunit HisF (255 aa).

Catalysis depends on residues D11 and D130.

It belongs to the HisA/HisF family. In terms of assembly, heterodimer of HisH and HisF.

It is found in the cytoplasm. The catalysed reaction is 5-[(5-phospho-1-deoxy-D-ribulos-1-ylimino)methylamino]-1-(5-phospho-beta-D-ribosyl)imidazole-4-carboxamide + L-glutamine = D-erythro-1-(imidazol-4-yl)glycerol 3-phosphate + 5-amino-1-(5-phospho-beta-D-ribosyl)imidazole-4-carboxamide + L-glutamate + H(+). It functions in the pathway amino-acid biosynthesis; L-histidine biosynthesis; L-histidine from 5-phospho-alpha-D-ribose 1-diphosphate: step 5/9. Functionally, IGPS catalyzes the conversion of PRFAR and glutamine to IGP, AICAR and glutamate. The HisF subunit catalyzes the cyclization activity that produces IGP and AICAR from PRFAR using the ammonia provided by the HisH subunit. The protein is Imidazole glycerol phosphate synthase subunit HisF of Exiguobacterium sp. (strain ATCC BAA-1283 / AT1b).